The chain runs to 604 residues: UvrABC system protein C (604 aa).

The region spanning 17-95 is the GIY-YIG domain; that stretch reads AQPGVYRMLN…IKSLAPRYNI (79 aa). The UVR domain occupies 204 to 239; sequence DEVLKTIEQKMFTASDQQDYEQAAQLRDQMQALRKI.

This sequence belongs to the UvrC family. Interacts with UvrB in an incision complex.

The protein localises to the cytoplasm. The UvrABC repair system catalyzes the recognition and processing of DNA lesions. UvrC both incises the 5' and 3' sides of the lesion. The N-terminal half is responsible for the 3' incision and the C-terminal half is responsible for the 5' incision. The chain is UvrABC system protein C from Nitrosomonas europaea (strain ATCC 19718 / CIP 103999 / KCTC 2705 / NBRC 14298).